The chain runs to 198 residues: Large ribosomal subunit protein bL25 (198 aa).

Belongs to the bacterial ribosomal protein bL25 family. CTC subfamily. As to quaternary structure, part of the 50S ribosomal subunit; part of the 5S rRNA/L5/L18/L25 subcomplex. Contacts the 5S rRNA. Binds to the 5S rRNA independently of L5 and L18.

In terms of biological role, this is one of the proteins that binds to the 5S RNA in the ribosome where it forms part of the central protuberance. This chain is Large ribosomal subunit protein bL25, found in Bordetella avium (strain 197N).